Reading from the N-terminus, the 335-residue chain is Twinfilin (335 aa).

2 ADF-H domains span residues 4–140 (SSGI…QHKL) and 176–316 (GISF…NELH). Residues 307–335 (SEESIINELHPPKVEEKKAFSKPSRPGRK) form a disordered region. The span at 316–325 (HPPKVEEKKA) shows a compositional bias: basic and acidic residues.

This sequence belongs to the actin-binding proteins ADF family. Twinfilin subfamily. Interacts with G-actin; ADP-actin form.

It is found in the cytoplasm. Its subcellular location is the cytoskeleton. It localises to the cell cortex. Actin-binding protein involved in motile and morphological processes. Inhibits actin polymerization, likely by sequestering G-actin. The protein is Twinfilin (twfA) of Dictyostelium discoideum (Social amoeba).